A 584-amino-acid chain; its full sequence is Probable DNA ligase (584 aa).

Residue E248 participates in ATP binding. K250 (N6-AMP-lysine intermediate) is an active-site residue. ATP-binding residues include R255, R270, E299, F339, R416, and K422.

It belongs to the ATP-dependent DNA ligase family. Requires Mg(2+) as cofactor.

The enzyme catalyses ATP + (deoxyribonucleotide)n-3'-hydroxyl + 5'-phospho-(deoxyribonucleotide)m = (deoxyribonucleotide)n+m + AMP + diphosphate.. Functionally, DNA ligase that seals nicks in double-stranded DNA during DNA replication, DNA recombination and DNA repair. The chain is Probable DNA ligase from Aquifex aeolicus (strain VF5).